The sequence spans 428 residues: Endoplasmic reticulum junction formation protein lunapark (428 aa).

Glycine 2 carries N-myristoyl glycine lipidation. The Cytoplasmic portion of the chain corresponds to 2–45 (GGLFSRWRTKPSTVEVLESIDKEIQALEEFREKNQRLQKLWVGR). Residues 16 to 41 (EVLESIDKEIQALEEFREKNQRLQKL) are a coiled coil. A helical membrane pass occupies residues 46 to 66 (LILYSSVLYLFTCLIVYLWYL). Over 67–77 (PDEFTARLAMT) the chain is Lumenal. Residues 78–98 (LPFFAFPLIIWSIRTVIIFFF) form a helical membrane-spanning segment. Over 99 to 428 (SKRTERNNEA…ELSGESLTAE (330 aa)) the chain is Cytoplasmic. A coiled-coil region spans residues 102–128 (TERNNEALDDLKSQRKKILEEVMEKET). 5 positions are modified to phosphoserine: serine 114, serine 153, serine 177, serine 182, and serine 194. Residues 143-247 (SKKAKECEPP…HPPGPPLARP (105 aa)) form a disordered region. Positions 185–198 (QGPPPQVPVSPGPP) are enriched in pro residues. Phosphothreonine is present on residues threonine 211 and threonine 213. Phosphoserine is present on residues serine 217 and serine 227. The C4-type; plays a role in ER morphology zinc-finger motif lies at 276–301 (CQQCFSHNGMALKEEFEYIAFRCAYC). Phosphoserine is present on residues serine 321, serine 353, and serine 384. The tract at residues 356–428 (HDVLDDNTEQ…ELSGESLTAE (73 aa)) is disordered. Positions 386–401 (SEEPEEKQETENEEAS) are enriched in acidic residues. Serine 414 is modified (phosphoserine).

The protein belongs to the lunapark family. Homodimer; homodimerization requires the C4-type zinc finger motif and decreases during mitosis in a phosphorylation-dependent manner. In terms of processing, myristoylated; myristoylation is necessary for the endoplasmic reticulum (ER) three-way ER tubular junction formation, but is not required neither for membrane translocation, membrane topology formation, nor for the specific localization to ER membranes. Post-translationally, phosphorylated. Phosphorylation occurs at Ser-177, Ser-182, Ser-217, Ser-227, Ser-321 and Ser-384 during interphase. Phosphorylation occurs at Ser-114, Ser-153, Ser-194, Thr-211 and Ser-353 during mitosis; these phosphorylations reduce both its homodimerization and the ER three-way tubular junction formation. Subject to proteasomal degradation following phosphorylation during mitosis. In terms of tissue distribution, expressed in neural precursor cells, where it is detected at the growth-cone-like structure and branching sites of neurite-like processes.

It localises to the endoplasmic reticulum membrane. In terms of biological role, endoplasmic reticulum (ER)-shaping membrane protein that plays a role in determining ER morphology. Involved in the stabilization of nascent three-way ER tubular junctions within the ER network. May also play a role as a curvature-stabilizing protein within the three-way ER tubular junction network. May be involved in limb development. Is involved in central nervous system development. The sequence is that of Endoplasmic reticulum junction formation protein lunapark from Homo sapiens (Human).